The sequence spans 1305 residues: Contactin-associated protein-like 5 (1305 aa).

The signal sequence occupies residues 1–22 (MDSPALGAVALLLAGFWHLGLT). Residues 23 to 174 (ATNYNCDGAL…IGLRVEVFGC (152 aa)) enclose the F5/8 type C domain. The Extracellular segment spans residues 23-1236 (ATNYNCDGAL…PLTNAVRSDS (1214 aa)). 2 consecutive Laminin G-like domains span residues 180-360 (IADF…TFSC) and 367-544 (PITF…IDLC). Disulfide bonds link Cys329-Cys360, Cys512-Cys544, Cys550-Cys561, Cys555-Cys570, and Cys572-Cys582. Residues 546-583 (IKDRCLPNYCEHGGKCSQSWTTFYCDCNDTSYMGATCH) form the EGF-like 1 domain. The Fibrinogen C-terminal domain occupies 584-790 (NSIYEQSCEA…LHCYGDRQFW (207 aa)). The Laminin G-like 3 domain maps to 791–956 (NAASFNTEAS…KMTPGVKPGC (166 aa)). 5 disulfide bridges follow: Cys929-Cys956, Cys960-Cys973, Cys967-Cys982, Cys984-Cys994, and Cys1163-Cys1198. The region spanning 957–995 (PGHCSSYGNLCHNGGKCVEKYNGYSCDCTSSAYEGPFCK) is the EGF-like 2 domain. Residues 1017–1198 (PVTKNASTSS…VKGSLTESSC (182 aa)) enclose the Laminin G-like 4 domain. Residues 1237–1257 (AVIGGVIAVVIFIIFCIIAIM) traverse the membrane as a helical segment. At 1258 to 1305 (SRFLYQHKQAHRSSQTKEKEYPENLESSFKADIDLQNTVSECKREYFI) the chain is on the cytoplasmic side.

This sequence belongs to the neurexin family. In terms of tissue distribution, expressed in brain.

It localises to the membrane. In terms of biological role, may play a role in the correct development and proper functioning of the peripheral and central nervous system and be involved in cell adhesion and intercellular communication. The polypeptide is Contactin-associated protein-like 5 (CNTNAP5) (Gallus gallus (Chicken)).